We begin with the raw amino-acid sequence, 282 residues long: Pantothenate synthetase (282 aa).

30 to 37 (MGYLHQGH) contributes to the ATP binding site. Catalysis depends on histidine 37, which acts as the Proton donor. Residue glutamine 61 participates in (R)-pantoate binding. Glutamine 61 is a beta-alanine binding site. 147-150 (GQKD) is a binding site for ATP. Glutamine 153 is a binding site for (R)-pantoate. ATP-binding positions include valine 176 and 184–187 (MSSR).

It belongs to the pantothenate synthetase family. As to quaternary structure, homodimer.

The protein localises to the cytoplasm. It catalyses the reaction (R)-pantoate + beta-alanine + ATP = (R)-pantothenate + AMP + diphosphate + H(+). It functions in the pathway cofactor biosynthesis; (R)-pantothenate biosynthesis; (R)-pantothenate from (R)-pantoate and beta-alanine: step 1/1. Functionally, catalyzes the condensation of pantoate with beta-alanine in an ATP-dependent reaction via a pantoyl-adenylate intermediate. This Geotalea daltonii (strain DSM 22248 / JCM 15807 / FRC-32) (Geobacter daltonii) protein is Pantothenate synthetase.